Here is a 108-residue protein sequence, read N- to C-terminus: Thiosulfate sulfurtransferase GlpE (108 aa).

In terms of domain architecture, Rhodanese spans E18 to T106. C66 (cysteine persulfide intermediate) is an active-site residue.

It belongs to the GlpE family.

The protein resides in the cytoplasm. The catalysed reaction is thiosulfate + hydrogen cyanide = thiocyanate + sulfite + 2 H(+). It carries out the reaction thiosulfate + [thioredoxin]-dithiol = [thioredoxin]-disulfide + hydrogen sulfide + sulfite + 2 H(+). Functionally, transferase that catalyzes the transfer of sulfur from thiosulfate to thiophilic acceptors such as cyanide or dithiols. May function in a CysM-independent thiosulfate assimilation pathway by catalyzing the conversion of thiosulfate to sulfite, which can then be used for L-cysteine biosynthesis. The protein is Thiosulfate sulfurtransferase GlpE of Actinobacillus pleuropneumoniae serotype 3 (strain JL03).